We begin with the raw amino-acid sequence, 436 residues long: Trigger factor (436 aa).

The PPIase FKBP-type domain occupies 163–248 (TDRVIIDFAG…VKNVAEAILP (86 aa)).

It belongs to the FKBP-type PPIase family. Tig subfamily.

It localises to the cytoplasm. It carries out the reaction [protein]-peptidylproline (omega=180) = [protein]-peptidylproline (omega=0). Its function is as follows. Involved in protein export. Acts as a chaperone by maintaining the newly synthesized protein in an open conformation. Functions as a peptidyl-prolyl cis-trans isomerase. This Laribacter hongkongensis (strain HLHK9) protein is Trigger factor.